The sequence spans 347 residues: Selenide, water dikinase (347 aa).

Residue cysteine 17 is part of the active site. Residues lysine 20 and 48–50 (TRD) each bind ATP. Aspartate 51 serves as a coordination point for Mg(2+). ATP-binding positions include aspartate 68, aspartate 91, and 139 to 141 (GHS). Aspartate 91 lines the Mg(2+) pocket. Aspartate 227 contributes to the Mg(2+) binding site.

It belongs to the selenophosphate synthase 1 family. Class I subfamily. As to quaternary structure, homodimer. Mg(2+) serves as cofactor.

It carries out the reaction hydrogenselenide + ATP + H2O = selenophosphate + AMP + phosphate + 2 H(+). Its function is as follows. Synthesizes selenophosphate from selenide and ATP. In Salmonella typhimurium (strain LT2 / SGSC1412 / ATCC 700720), this protein is Selenide, water dikinase.